Consider the following 613-residue polypeptide: UvrABC system protein C (613 aa).

The GIY-YIG domain occupies 13 to 92; that stretch reads DKSGVYIMKD…IKKYKPKYNI (80 aa). A UVR domain is found at 204–239; it reads DEIINDLRIQMETAAEQLDFEKAAQLRNKITSIKQL.

It belongs to the UvrC family. Interacts with UvrB in an incision complex.

Its subcellular location is the cytoplasm. In terms of biological role, the UvrABC repair system catalyzes the recognition and processing of DNA lesions. UvrC both incises the 5' and 3' sides of the lesion. The N-terminal half is responsible for the 3' incision and the C-terminal half is responsible for the 5' incision. The sequence is that of UvrABC system protein C from Ruminiclostridium cellulolyticum (strain ATCC 35319 / DSM 5812 / JCM 6584 / H10) (Clostridium cellulolyticum).